Consider the following 38-residue polypeptide: Photosystem II reaction center protein L (38 aa).

A helical transmembrane segment spans residues 17–37 (SLYWGLLLIFVLAVLFSSYIF).

Belongs to the PsbL family. As to quaternary structure, PSII is composed of 1 copy each of membrane proteins PsbA, PsbB, PsbC, PsbD, PsbE, PsbF, PsbH, PsbI, PsbJ, PsbK, PsbL, PsbM, PsbT, PsbY, PsbZ, Psb30/Ycf12, at least 3 peripheral proteins of the oxygen-evolving complex and a large number of cofactors. It forms dimeric complexes.

It localises to the plastid. The protein resides in the chloroplast thylakoid membrane. One of the components of the core complex of photosystem II (PSII). PSII is a light-driven water:plastoquinone oxidoreductase that uses light energy to abstract electrons from H(2)O, generating O(2) and a proton gradient subsequently used for ATP formation. It consists of a core antenna complex that captures photons, and an electron transfer chain that converts photonic excitation into a charge separation. This subunit is found at the monomer-monomer interface and is required for correct PSII assembly and/or dimerization. The sequence is that of Photosystem II reaction center protein L from Bigelowiella natans (Pedinomonas minutissima).